Reading from the N-terminus, the 475-residue chain is Dihydrolipoyl dehydrogenase (475 aa).

FAD-binding positions include 39 to 47, K56, and A118; that span reads EKDAYGGTC. A disulfide bond links C47 and C52. Residues 186 to 190, E209, and 275 to 278 contribute to the NAD(+) site; these read GGGYI and AVGR. Positions 318 and 327 each coordinate FAD. The active-site Proton acceptor is H451.

This sequence belongs to the class-I pyridine nucleotide-disulfide oxidoreductase family. Homodimer. FAD is required as a cofactor.

The protein localises to the cytoplasm. The enzyme catalyses N(6)-[(R)-dihydrolipoyl]-L-lysyl-[protein] + NAD(+) = N(6)-[(R)-lipoyl]-L-lysyl-[protein] + NADH + H(+). The polypeptide is Dihydrolipoyl dehydrogenase (lpdA) (Haloferax volcanii (strain ATCC 29605 / DSM 3757 / JCM 8879 / NBRC 14742 / NCIMB 2012 / VKM B-1768 / DS2) (Halobacterium volcanii)).